Here is a 412-residue protein sequence, read N- to C-terminus: POU domain, class 4, transcription factor 2 (412 aa).

The interval 29–96 is disordered; the sequence is LHSASPGSSA…SEAMRRACLP (68 aa). Over residues 31-53 the composition is skewed to low complexity; sequence SASPGSSAPAAPSASSPSSSSNA. Composition is skewed to gly residues over residues 54-70 and 78-87; these read GSGG…GGGR and GSGGGGGGGS. The tract at residues 94 to 240 is required for transcriptional activation; that stretch reads CLPTPPSNIF…MHQAALSMAH (147 aa). Residues 113–122 carry the POU-IV box motif; sequence RAEALAAVDI. Residues 123–191 form a disordered region; that stretch reads VSQSKSHHHH…HHHHQPHQAL (69 aa). Over residues 127-138 the composition is skewed to basic residues; the sequence is KSHHHHPPHHSP. A compositionally biased stretch (low complexity) spans 152–169; the sequence is PCTSAASSSSVPISHPSA. The span at 173 to 187 shows a compositional bias: basic residues; it reads THHHHHHHHHHHHQP. A Nuclear speckle targeting signal motif is present at residues 174–188; the sequence is HHHHHHHHHHHHQPH. The segment at 241-412 is required for DNA-binding and transcriptional repression; the sequence is AHGLPSHMGC…QKRMKYSAGI (172 aa). The POU-specific domain maps to 253 to 330; sequence DVDADPRDLE…ILQAWLEEAE (78 aa). Residues 348-407 constitute a DNA-binding region (homeobox); the sequence is KKRKRTSIAAPEKRSLEAYFAIQPRPSSEKIAAIAEKLDLKKNVVRVWFCNQRQKQKRMK.

The protein belongs to the POU transcription factor family. Class-4 subfamily. In terms of assembly, interacts with POU4F1; this interaction inhibits both POU4F1 DNA-binding and transcriptional activities. Interacts (C-terminus) with ESR1 (via DNA-binding domain); this interaction increases the estrogen receptor ESR1 transcriptional activity in a DNA- and ligand 17-beta-estradiol-independent manner. Interacts (via C-terminus) with TP53 (via N-terminus). Interacts with DLX1 (via homeobox DNA-binding domain); this interaction suppresses DLX1-mediated transcriptional activity in postnatal retina enhancing retinal ganglion cell (RGC) differentiation. Interacts with DLX2 (via homeobox DNA-binding domain); this interaction enhances RGC differentiation. Interacts (via C-terminus) with ISL1 (via C-terminus). Interacts with ISL2. Interacts with LHX2. Expressed in the heart, brain and spinal cord. Expressed in cardiomyocytes (at protein level). Expressed in brain and spinal cord. Expressed in dorsal root ganglion (RGD) neurons.

It localises to the nucleus. Its subcellular location is the nucleus speckle. The protein localises to the cytoplasm. Functionally, tissue-specific DNA-binding transcription factor involved in the development and differentiation of target cells. Functions either as activator or repressor modulating the rate of target gene transcription through RNA polymerase II enzyme in a promoter-dependent manner. Binds to the consensus octamer motif 5'-AT[A/T]A[T/A]T[A/T]A-3' of promoter of target genes. Plays a fundamental role in the gene regulatory network essential for retinal ganglion cell (RGC) differentiation. Binds to an octamer site to form a ternary complex with ISL1; cooperates positively with ISL1 and ISL2 to potentiate transcriptional activation of RGC target genes being involved in RGC fate commitment in the developing retina and RGC axon formation and pathfinding. Inhibits DLX1 and DLX2 transcriptional activities preventing DLX1- and DLX2-mediated ability to promote amacrine cell fate specification. In cooperation with TP53 potentiates transcriptional activation of BAX promoter activity increasing neuronal cell apoptosis. Negatively regulates BAX promoter activity in the absence of TP53. Acts as a transcriptional coactivator via its interaction with the transcription factor ESR1 by enhancing its effect on estrogen response element (ERE)-containing promoter. Antagonizes the transcriptional stimulatory activity of POU4F1 by preventing its binding to an octamer motif. Involved in TNFSF11-mediated terminal osteoclast differentiation. This is POU domain, class 4, transcription factor 2 from Rattus norvegicus (Rat).